Here is a 222-residue protein sequence, read N- to C-terminus: 7-cyano-7-deazaguanine synthase (222 aa).

14–24 (FSGGQDSTTCL) lines the ATP pocket. Residues C190, C199, C202, and C205 each coordinate Zn(2+).

The protein belongs to the QueC family. As to quaternary structure, homodimer. Zn(2+) is required as a cofactor.

The catalysed reaction is 7-carboxy-7-deazaguanine + NH4(+) + ATP = 7-cyano-7-deazaguanine + ADP + phosphate + H2O + H(+). It functions in the pathway purine metabolism; 7-cyano-7-deazaguanine biosynthesis. Catalyzes the ATP-dependent conversion of 7-carboxy-7-deazaguanine (CDG) to 7-cyano-7-deazaguanine (preQ(0)). The sequence is that of 7-cyano-7-deazaguanine synthase from Staphylococcus aureus (strain bovine RF122 / ET3-1).